The primary structure comprises 160 residues: Vesicle transport protein SFT2B (160 aa).

Methionine 1 bears the N-acetylmethionine mark. The Cytoplasmic portion of the chain corresponds to 1–36; it reads MDKLKKVLSGQDTEDRSGLSEVVEASSLSWSTRIKG. Serine 9 is subject to Phosphoserine. A helical membrane pass occupies residues 37 to 57; the sequence is FIACFAIGILCSLLGTVLLWV. Over 58-63 the chain is Lumenal; that stretch reads PRKGLH. The chain crosses the membrane as a helical span at residues 64 to 84; the sequence is LFAVFYTFGNIASIGSTIFLM. The Cytoplasmic portion of the chain corresponds to 85–98; sequence GPVKQLKRMFEPTR. A helical transmembrane segment spans residues 99 to 119; that stretch reads LIATIMVLLCFALTLCSAFWW. At 120-123 the chain is on the lumenal side; the sequence is HNKG. A helical membrane pass occupies residues 124 to 144; that stretch reads LALIFCILQSLALTWYSLSFI. Over 145-160 the chain is Cytoplasmic; sequence PFARDAVKKCFAVCLA.

The protein belongs to the SFT2 family.

The protein resides in the membrane. In terms of biological role, may be involved in fusion of retrograde transport vesicles derived from an endocytic compartment with the Golgi complex. The sequence is that of Vesicle transport protein SFT2B from Homo sapiens (Human).